The primary structure comprises 338 residues: Probable tRNA pseudouridine synthase B (338 aa).

Asp80 functions as the Nucleophile in the catalytic mechanism. Positions 247–322 constitute a PUA domain; the sequence is LPRIEIRDTA…IMVDTKRVLM (76 aa).

This sequence belongs to the pseudouridine synthase TruB family. Type 2 subfamily.

It catalyses the reaction uridine(55) in tRNA = pseudouridine(55) in tRNA. In terms of biological role, could be responsible for synthesis of pseudouridine from uracil-55 in the psi GC loop of transfer RNAs. The chain is Probable tRNA pseudouridine synthase B from Methanopyrus kandleri (strain AV19 / DSM 6324 / JCM 9639 / NBRC 100938).